The primary structure comprises 175 residues: Peptide deformylase (175 aa).

Fe cation contacts are provided by C99 and H141. E142 is a catalytic residue. H145 contacts Fe cation.

This sequence belongs to the polypeptide deformylase family. Requires Fe(2+) as cofactor.

The enzyme catalyses N-terminal N-formyl-L-methionyl-[peptide] + H2O = N-terminal L-methionyl-[peptide] + formate. Removes the formyl group from the N-terminal Met of newly synthesized proteins. Requires at least a dipeptide for an efficient rate of reaction. N-terminal L-methionine is a prerequisite for activity but the enzyme has broad specificity at other positions. The sequence is that of Peptide deformylase from Rickettsia canadensis (strain McKiel).